The following is a 252-amino-acid chain: Imidazole glycerol phosphate synthase subunit HisF (252 aa).

Catalysis depends on residues Asp-11 and Asp-130.

This sequence belongs to the HisA/HisF family. In terms of assembly, heterodimer of HisH and HisF.

The protein resides in the cytoplasm. It carries out the reaction 5-[(5-phospho-1-deoxy-D-ribulos-1-ylimino)methylamino]-1-(5-phospho-beta-D-ribosyl)imidazole-4-carboxamide + L-glutamine = D-erythro-1-(imidazol-4-yl)glycerol 3-phosphate + 5-amino-1-(5-phospho-beta-D-ribosyl)imidazole-4-carboxamide + L-glutamate + H(+). Its pathway is amino-acid biosynthesis; L-histidine biosynthesis; L-histidine from 5-phospho-alpha-D-ribose 1-diphosphate: step 5/9. Functionally, IGPS catalyzes the conversion of PRFAR and glutamine to IGP, AICAR and glutamate. The HisF subunit catalyzes the cyclization activity that produces IGP and AICAR from PRFAR using the ammonia provided by the HisH subunit. This chain is Imidazole glycerol phosphate synthase subunit HisF, found in Staphylococcus saprophyticus subsp. saprophyticus (strain ATCC 15305 / DSM 20229 / NCIMB 8711 / NCTC 7292 / S-41).